The sequence spans 54 residues: uncharacterized protein (54 aa).

A helical transmembrane segment spans residues 21 to 43 (SYVVCLYMCGSDCACICVLACVV).

The protein localises to the membrane. This is an uncharacterized protein from Saccharomyces cerevisiae (strain ATCC 204508 / S288c) (Baker's yeast).